We begin with the raw amino-acid sequence, 84 residues long: CDC42 small effector protein 2-A (84 aa).

2 S-palmitoyl cysteine lipidation sites follow: Cys-10 and Cys-11. Positions 29-42 (IGEPTNFVHTAHVG) constitute a CRIB domain.

Belongs to the CDC42SE/SPEC family.

Its subcellular location is the cytoplasm. It localises to the cytoskeleton. The protein localises to the cell membrane. Its function is as follows. Probably involved in the organization of the actin cytoskeleton by acting downstream of CDC42, inducing actin filament assembly. In Xenopus tropicalis (Western clawed frog), this protein is CDC42 small effector protein 2-A (cdc42se2-A).